Consider the following 421-residue polypeptide: Thymidine phosphorylase (421 aa).

Belongs to the thymidine/pyrimidine-nucleoside phosphorylase family. Homodimer.

The catalysed reaction is thymidine + phosphate = 2-deoxy-alpha-D-ribose 1-phosphate + thymine. In terms of biological role, the enzymes which catalyze the reversible phosphorolysis of pyrimidine nucleosides are involved in the degradation of these compounds and in their utilization as carbon and energy sources, or in the rescue of pyrimidine bases for nucleotide synthesis. The protein is Thymidine phosphorylase (deoA) of Mycoplasma pneumoniae (strain ATCC 29342 / M129 / Subtype 1) (Mycoplasmoides pneumoniae).